Here is a 300-residue protein sequence, read N- to C-terminus: C-4 methylsterol oxidase erg25 (300 aa).

The Fatty acid hydroxylase domain occupies 140 to 276 (TLFFFLEDTW…FRWWDAVLKT (137 aa)). A Histidine box-1 motif is present at residues 154 to 158 (HRLFH). Positions 167–171 (HKVHH) match the Histidine box-2 motif. A helical transmembrane segment spans residues 186–206 (PLEIILLGAGTVFVPLMWCYF). The short motif at 251–257 (HHDYHHM) is the Histidine box-3 element.

The protein belongs to the sterol desaturase family. Heterotetramer of erg25, erg26, erg27 and erg28. Erg28 acts as a scaffold to tether erg27 and other 4,4-demethylation-related enzymes, forming a demethylation enzyme complex, in the endoplasmic reticulum. Fe cation is required as a cofactor.

Its subcellular location is the endoplasmic reticulum membrane. The enzyme catalyses 4,4-dimethyl-5alpha-cholesta-8,24-dien-3beta-ol + 6 Fe(II)-[cytochrome b5] + 3 O2 + 5 H(+) = 4beta-methylzymosterol-4alpha-carboxylate + 6 Fe(III)-[cytochrome b5] + 4 H2O. It carries out the reaction 4alpha-methylzymosterol + 6 Fe(II)-[cytochrome b5] + 3 O2 + 5 H(+) = 4alpha-carboxyzymosterol + 6 Fe(III)-[cytochrome b5] + 4 H2O. It participates in steroid biosynthesis; zymosterol biosynthesis; zymosterol from lanosterol: step 3/6. It functions in the pathway steroid metabolism; ergosterol biosynthesis. In terms of biological role, C-4 methylsterol oxidase; part of the third module of ergosterol biosynthesis pathway that includes by the late steps of the pathway. Erg25 is a catalytic component of the C-4 demethylation complex that catalyzes the three-step monooxygenation required for the demethylation of 4,4-dimethyl and 4alpha-methylsterols. The third module or late pathway involves the ergosterol synthesis itself through consecutive reactions that mainly occur in the endoplasmic reticulum (ER) membrane. Firstly, the squalene synthase erg9 catalyzes the condensation of 2 farnesyl pyrophosphate moieties to form squalene, which is the precursor of all steroids. Secondly, squalene is converted into lanosterol by the consecutive action of the squalene epoxidase erg1 and the lanosterol synthase erg7. The lanosterol 14-alpha-demethylase erg11/cyp1 catalyzes C14-demethylation of lanosterol to produce 4,4'-dimethyl cholesta-8,14,24-triene-3-beta-ol. In the next steps, a complex process involving various demethylation, reduction and desaturation reactions catalyzed by the C-14 reductase erg24 and the C-4 demethylation complex erg25-erg26-erg27 leads to the production of zymosterol. Erg28 likely functions in the C-4 demethylation complex reaction by tethering erg26 and Erg27 to the endoplasmic reticulum or to facilitate interaction between these proteins. Then, the sterol 24-C-methyltransferase erg6 catalyzes the methyl transfer from S-adenosyl-methionine to the C-24 of zymosterol to form fecosterol. The C-8 sterol isomerase erg2 catalyzes the reaction which results in unsaturation at C-7 in the B ring of sterols and thus converts fecosterol to episterol. The sterol-C5-desaturases erg31 and erg32 then catalyze the introduction of a C-5 double bond in the B ring to produce 5-dehydroepisterol. The C-22 sterol desaturase erg5 further converts 5-dehydroepisterol into ergosta-5,7,22,24(28)-tetraen-3beta-ol by forming the C-22(23) double bond in the sterol side chain. Finally, ergosta-5,7,22,24(28)-tetraen-3beta-ol is substrate of the C-24(28) sterol reductase erg4 to produce ergosterol. In the genus Schizosaccharomyces, a second route exists between lanosterol and fecosterol, via the methylation of lanosterol to eburicol by erg6, followed by C14-demethylation by erg11/cyp1 and C4-demethylation by the demethylation complex erg25-erg26-erg27. This Schizosaccharomyces pombe (strain 972 / ATCC 24843) (Fission yeast) protein is C-4 methylsterol oxidase erg25.